Consider the following 729-residue polypeptide: Receptor-like protein 2 (729 aa).

The first 44 residues, 1-44 (MRSKAKGLVRPLITKPVQPLSSHMHLFLLCILFLSALFLTLSEA), serve as a signal peptide directing secretion. Residues 45–82 (VCNLQDRESLIWFSGNVSSSVSPLNWNLSIDCCSWEGI) form an N-cap region. Topologically, residues 45–707 (VCNLQDRESL…AKENDELNRT (663 aa)) are extracellular. N-linked (GlcNAc...) asparagine glycans are attached at residues Asn60 and Asn71. LRR repeat units follow at residues 89–113 (DSHV…VQNI), 114–137 (HRLS…FFST), 139–163 (DQLM…AFGN), 168–193 (FFSI…VYLQ), 195–219 (TINL…MCRS), 220–244 (SPQL…LGRC), 245–268 (LRLT…IYNL), 269–292 (SELE…ITRL), 293–316 (RKLT…IGNL), 317–340 (SSLR…LANC), 342–364 (KLVK…EFSQ), 365–389 (LQSL…IFSC), 391–413 (SLTA…VLEL), 414–437 (ESLS…SILQ), 439–464 (CRKL…DFLS), 468–492 (FPKL…LINL), 493–515 (NKVE…WLGT), 516–540 (LPDL…LFQL), 542–560 (ALMS…PIFL), and 561–584 (NPNN…IYIR). N-linked (GlcNAc...) asparagine glycosylation is found at Asn145 and Asn163. N-linked (GlcNAc...) asparagine glycosylation is found at Asn202 and Asn205. N-linked (GlcNAc...) asparagine glycans are attached at residues Asn256, Asn267, Asn288, Asn315, Asn330, and Asn339. N-linked (GlcNAc...) asparagine glycosylation occurs at Asn375. Asn428 carries N-linked (GlcNAc...) asparagine glycosylation. 7 N-linked (GlcNAc...) asparagine glycosylation sites follow: Asn564, Asn587, Asn611, Asn622, Asn635, Asn657, and Asn705. 3 LRR repeats span residues 599-623 (LKVL…LSNL), 624-647 (TNLE…LTNL), and 649-672 (FLSY…QFDT). Positions 690–707 (LTSCKPTRAKENDELNRT) are C-cap/acidic domain. Residues 708-728 (FLMGIAIGYFLSFVSILVVRA) form a helical membrane-spanning segment. A topological domain (cytoplasmic) is located at residue Trp729.

The protein belongs to the RLP family.

The protein resides in the cell membrane. Its function is as follows. Involved in the perception of CLV3 and CLV3-like peptides, that act as extracellular signals regulating meristems maintenance. This Arabidopsis thaliana (Mouse-ear cress) protein is Receptor-like protein 2.